A 397-amino-acid chain; its full sequence is Elongation factor Tu (397 aa).

One can recognise a tr-type G domain in the interval 10-206 (KPHVNIGTIG…HIDTYIPEPT (197 aa)). The tract at residues 19 to 26 (GHVDHGKT) is G1. Residue 19-26 (GHVDHGKT) coordinates GTP. Residue Thr-26 coordinates Mg(2+). Residues 61–65 (GITIS) form a G2 region. Positions 82-85 (DCPG) are G3. Residues 82-86 (DCPGH) and 137-140 (NKCD) contribute to the GTP site. The tract at residues 137–140 (NKCD) is G4. The G5 stretch occupies residues 175-177 (SAL).

This sequence belongs to the TRAFAC class translation factor GTPase superfamily. Classic translation factor GTPase family. EF-Tu/EF-1A subfamily. In terms of assembly, monomer.

It is found in the cytoplasm. It catalyses the reaction GTP + H2O = GDP + phosphate + H(+). GTP hydrolase that promotes the GTP-dependent binding of aminoacyl-tRNA to the A-site of ribosomes during protein biosynthesis. This Alkaliphilus oremlandii (strain OhILAs) (Clostridium oremlandii (strain OhILAs)) protein is Elongation factor Tu.